Consider the following 102-residue polypeptide: Acid shock protein (102 aa).

A signal peptide spans 1–21; the sequence is MKKVLALVVAAAMGLSSAAFA. Low complexity predominate over residues 22-41; sequence AETATTPAPTATTTKAAPAK. Positions 22–58 are excised as a propeptide; it reads AETATTPAPTATTTKAAPAKTTHHKKQHKAAPAQKAQ. The disordered stretch occupies residues 22–102; the sequence is AETATTPAPT…PAKPAAQPAA (81 aa). A compositionally biased stretch (basic residues) spans 80–90; the sequence is AAKKHARKHSH. Positions 91–102 are enriched in low complexity; sequence QQPAKPAAQPAA.

This sequence belongs to the Asr family. In terms of processing, proteolytic processing gives rise to the active protein.

The protein resides in the periplasm. Its function is as follows. Required for growth and/or survival at acidic conditions. The protein is Acid shock protein of Escherichia coli O127:H6 (strain E2348/69 / EPEC).